We begin with the raw amino-acid sequence, 330 residues long: Peroxidase N1 (330 aa).

A signal peptide spans 1–29; sequence MEYYHHSINKMAMFMVILVLAIDVTMVLG. At Gln30 the chain carries Pyrrolidone carboxylic acid. 4 cysteine pairs are disulfide-bonded: Cys41–Cys117, Cys74–Cys79, Cys123–Cys326, and Cys201–Cys233. Catalysis depends on His72, which acts as the Proton acceptor. Residues Asp73, Val76, Gly78, Asp80, and Ser82 each coordinate Ca(2+). Pro164 contributes to the substrate binding site. His194 is a heme b binding site. Thr195 is a Ca(2+) binding site. A glycan (N-linked (GlcNAc...) asparagine) is linked at Asn212. Positions 246 and 254 each coordinate Ca(2+).

The protein belongs to the peroxidase family. Classical plant (class III) peroxidase subfamily. It depends on Ca(2+) as a cofactor. The cofactor is heme b. As to expression, expressed at a high level in roots and at a trace level in lower leaves. Not expressed in upper leaves, stems, flowers, seeds and shoot apices.

It is found in the secreted. The enzyme catalyses 2 a phenolic donor + H2O2 = 2 a phenolic radical donor + 2 H2O. Removal of H(2)O(2), oxidation of toxic reductants, biosynthesis and degradation of lignin, suberization, auxin catabolism, response to environmental stresses such as wounding, pathogen attack and oxidative stress. These functions might be dependent on each isozyme/isoform in each plant tissue. Can use NADH, NADPH and monolignols as substrates. This is Peroxidase N1 from Nicotiana tabacum (Common tobacco).